A 586-amino-acid polypeptide reads, in one-letter code: UvrABC system protein C (586 aa).

The 78-residue stretch at 17–94 (HKPGCYLWKD…IKQYKPRFNL (78 aa)) folds into the GIY-YIG domain. Residues 201-236 (EQVLNHLQQQEIKASEQQNFEAARHFLDLQKAVLEL) enclose the UVR domain.

Belongs to the UvrC family. In terms of assembly, interacts with UvrB in an incision complex.

The protein resides in the cytoplasm. In terms of biological role, the UvrABC repair system catalyzes the recognition and processing of DNA lesions. UvrC both incises the 5' and 3' sides of the lesion. The N-terminal half is responsible for the 3' incision and the C-terminal half is responsible for the 5' incision. The protein is UvrABC system protein C of Mycoplasma pneumoniae (strain ATCC 29342 / M129 / Subtype 1) (Mycoplasmoides pneumoniae).